The following is a 162-amino-acid chain: N5-carboxyaminoimidazole ribonucleotide mutase (162 aa).

Ser-11, Asp-14, and Arg-41 together coordinate substrate.

This sequence belongs to the AIR carboxylase family. Class I subfamily.

The catalysed reaction is 5-carboxyamino-1-(5-phospho-D-ribosyl)imidazole + H(+) = 5-amino-1-(5-phospho-D-ribosyl)imidazole-4-carboxylate. The protein operates within purine metabolism; IMP biosynthesis via de novo pathway; 5-amino-1-(5-phospho-D-ribosyl)imidazole-4-carboxylate from 5-amino-1-(5-phospho-D-ribosyl)imidazole (N5-CAIR route): step 2/2. Functionally, catalyzes the conversion of N5-carboxyaminoimidazole ribonucleotide (N5-CAIR) to 4-carboxy-5-aminoimidazole ribonucleotide (CAIR). This chain is N5-carboxyaminoimidazole ribonucleotide mutase, found in Brucella melitensis biotype 1 (strain ATCC 23456 / CCUG 17765 / NCTC 10094 / 16M).